The chain runs to 256 residues: Dihydroorotate dehydrogenase B (NAD(+)), electron transfer subunit (256 aa).

An FAD-binding FR-type domain is found at 2–100 (IRLETMKVVA…MGPQGNGFDL (99 aa)). FAD-binding positions include 51-54 (RPIS), 68-70 (IYR), and 75-76 (GT). [2Fe-2S] cluster is bound by residues cysteine 220, cysteine 225, cysteine 228, and cysteine 243.

Belongs to the PyrK family. In terms of assembly, heterotetramer of 2 PyrK and 2 PyrD type B subunits. The cofactor is [2Fe-2S] cluster. FAD is required as a cofactor.

It participates in pyrimidine metabolism; UMP biosynthesis via de novo pathway; orotate from (S)-dihydroorotate (NAD(+) route): step 1/1. In terms of biological role, responsible for channeling the electrons from the oxidation of dihydroorotate from the FMN redox center in the PyrD type B subunit to the ultimate electron acceptor NAD(+). This is Dihydroorotate dehydrogenase B (NAD(+)), electron transfer subunit from Streptococcus pneumoniae (strain ATCC BAA-255 / R6).